A 98-amino-acid chain; its full sequence is Beta-2-microglobulin (98 aa).

In terms of domain architecture, Ig-like C1-type spans 4-92 (PKVQVYSRFP…HETLKEPQVY (89 aa)). Residues Cys-24 and Cys-79 are joined by a disulfide bond.

This sequence belongs to the beta-2-microglobulin family. Heterodimer of an alpha chain and a beta chain. Beta-2-microglobulin is the beta-chain of major histocompatibility complex class I molecules.

Its subcellular location is the secreted. Its function is as follows. Component of the class I major histocompatibility complex (MHC). Involved in the presentation of peptide antigens to the immune system. This Meleagris gallopavo (Wild turkey) protein is Beta-2-microglobulin (B2M).